Consider the following 418-residue polypeptide: Glutamyl-tRNA reductase (418 aa).

Substrate contacts are provided by residues 49 to 52, Ser109, 114 to 116, and Gln120; these read TCNR and EPQ. The Nucleophile role is filled by Cys50. NADP(+) is bound at residue 189–194; sequence GAGETI.

It belongs to the glutamyl-tRNA reductase family. Homodimer.

It carries out the reaction (S)-4-amino-5-oxopentanoate + tRNA(Glu) + NADP(+) = L-glutamyl-tRNA(Glu) + NADPH + H(+). It functions in the pathway porphyrin-containing compound metabolism; protoporphyrin-IX biosynthesis; 5-aminolevulinate from L-glutamyl-tRNA(Glu): step 1/2. In terms of biological role, catalyzes the NADPH-dependent reduction of glutamyl-tRNA(Glu) to glutamate 1-semialdehyde (GSA). The polypeptide is Glutamyl-tRNA reductase (Salmonella heidelberg (strain SL476)).